We begin with the raw amino-acid sequence, 132 residues long: uncharacterized protein (132 aa).

An N-terminal signal peptide occupies residues 1-17 (MCPECFFLMLFFCGYRA). A compositionally biased stretch (low complexity) spans 25–39 (SSSSSSSSSSSFRSS). The segment at 25 to 79 (SSSSSSSSSSSFRSSPAYGFSGRPPGGAGCRERSQRSCLRPGGLPSLTRNPGLQR) is disordered.

This is an uncharacterized protein from Escherichia coli (strain K12).